A 1052-amino-acid polypeptide reads, in one-letter code: Kruppel-like factor 18 (1052 aa).

3 consecutive C2H2-type zinc fingers follow at residues Tyr964 to His988, Tyr994 to His1018, and Tyr1024 to His1046.

Belongs to the krueppel C2H2-type zinc-finger protein family.

The protein resides in the nucleus. The chain is Kruppel-like factor 18 from Homo sapiens (Human).